A 303-amino-acid polypeptide reads, in one-letter code: Phosphoribosylaminoimidazole-succinocarboxamide synthase (303 aa).

This sequence belongs to the SAICAR synthetase family.

The catalysed reaction is 5-amino-1-(5-phospho-D-ribosyl)imidazole-4-carboxylate + L-aspartate + ATP = (2S)-2-[5-amino-1-(5-phospho-beta-D-ribosyl)imidazole-4-carboxamido]succinate + ADP + phosphate + 2 H(+). The protein operates within purine metabolism; IMP biosynthesis via de novo pathway; 5-amino-1-(5-phospho-D-ribosyl)imidazole-4-carboxamide from 5-amino-1-(5-phospho-D-ribosyl)imidazole-4-carboxylate: step 1/2. The polypeptide is Phosphoribosylaminoimidazole-succinocarboxamide synthase (ADE1) (Pichia angusta (Yeast)).